Here is a 187-residue protein sequence, read N- to C-terminus: Phosphatidylethanolamine-binding protein 1 (187 aa).

The residue at position 2 (A2) is an N-acetylalanine; in peptide hippocampal cholinergic neurostimulating. S6 carries the phosphoserine modification. The residue at position 42 (T42) is a Phosphothreonine. S51, S52, S54, S98, and S132 each carry phosphoserine. The tract at residues 93–134 (KGNDISSGTVLSDYVGSGPPSGTGLHRYVWLVYEQEQPLSCD) is interaction with RAF1.

Belongs to the phosphatidylethanolamine-binding protein family. Has a tendency to form dimers by disulfide cross-linking. Interacts with RAF1 and this interaction is enhanced if RAF1 is phosphorylated on residues 'Ser-338', 'Ser-339', 'Tyr-340' and 'Tyr-341'. Interacts with ALOX15; in response to IL13/interleukin-13, prevents the interaction of PEBP1 with RAF1 to activate the ERK signaling cascade. In terms of tissue distribution, HCNP is expressed in brain. Increased expression in aged senescence-accelerated mice.

Its subcellular location is the cytoplasm. Functionally, binds ATP, opioids and phosphatidylethanolamine. Has lower affinity for phosphatidylinositol and phosphatidylcholine. Serine protease inhibitor which inhibits thrombin, neuropsin and chymotrypsin but not trypsin, tissue type plasminogen activator and elastase. Inhibits the kinase activity of RAF1 by inhibiting its activation and by dissociating the RAF1/MEK complex and acting as a competitive inhibitor of MEK phosphorylation. Its function is as follows. HCNP may be involved in the function of the presynaptic cholinergic neurons of the central nervous system. HCNP increases the production of choline acetyltransferase but not acetylcholinesterase. Seems to be mediated by a specific receptor. The sequence is that of Phosphatidylethanolamine-binding protein 1 (Pebp1) from Mus musculus (Mouse).